The primary structure comprises 237 residues: Small ribosomal subunit protein uS17m (237 aa).

It belongs to the universal ribosomal protein uS17 family. In terms of assembly, component of the mitochondrial small ribosomal subunit (mt-SSU). Mature yeast 74S mitochondrial ribosomes consist of a small (37S) and a large (54S) subunit. The 37S small subunit contains a 15S ribosomal RNA (15S mt-rRNA) and 34 different proteins. The 54S large subunit contains a 21S rRNA (21S mt-rRNA) and 46 different proteins.

It localises to the mitochondrion. Its function is as follows. Component of the mitochondrial ribosome (mitoribosome), a dedicated translation machinery responsible for the synthesis of mitochondrial genome-encoded proteins, including at least some of the essential transmembrane subunits of the mitochondrial respiratory chain. The mitoribosomes are attached to the mitochondrial inner membrane and translation products are cotranslationally integrated into the membrane. uS17m may have a meiosis-specific role as it accumulates during the middle stage of sporulation. The sequence is that of Small ribosomal subunit protein uS17m (MRPS17) from Saccharomyces cerevisiae (strain ATCC 204508 / S288c) (Baker's yeast).